A 300-amino-acid polypeptide reads, in one-letter code: Free fatty acid receptor 1 (300 aa).

Residues 1–8 (MDLPPQLS) are Extracellular-facing. Residues 9-31 (FALYVSAFALGFPLNLLAIRGAV) form a helical membrane-spanning segment. Over 32–41 (SHAKLRLTPS) the chain is Cytoplasmic. The chain crosses the membrane as a helical span at residues 42 to 64 (LVYTLHLGCSDLLLAITLPLKAV). Over 65 to 79 (EALASGAWPLPLPFC) the chain is Extracellular. Cys-79 and Cys-170 are disulfide-bonded. Residues 80–101 (PVFALAHFAPLYAGGGFLAALS) form a helical membrane-spanning segment. Over 102 to 121 (AGRYLGAAFPFGYQAIRRPR) the chain is Cytoplasmic. The chain crosses the membrane as a helical span at residues 122–142 (YSWGVCVAIWALVLCHLGLAL). Over 143–178 (GLETSGSWLDNSTSSLGINIPVNGSPVCLEAWDPDS) the chain is Extracellular. A glycan (N-linked (GlcNAc...) asparagine) is linked at Asn-153. Residues 179–200 (ARPARLSFSILLFFLPLVITAF) form a helical membrane-spanning segment. The Cytoplasmic portion of the chain corresponds to 201 to 223 (CYVGCLRALVRSGLSHKRKLRAA). A helical membrane pass occupies residues 224–248 (WVAGGALLTLLLCLGPYNASNVASF). Topologically, residues 249 to 256 (INPDLGGS) are extracellular. A helical transmembrane segment spans residues 257-279 (WRKLGLITGAWSVVLNPLVTGYL). The Cytoplasmic segment spans residues 280-300 (GTGPGRGTICVTRTQRGTIQK).

It belongs to the G-protein coupled receptor 1 family. In terms of tissue distribution, expressed in pancreatic islet beta cells (at protein level). Expressed in pancreatic islet beta cells.

The protein resides in the cell membrane. Its activity is regulated as follows. Is also activated by synthetic agonists, such as AM-8182, AM-6331 and TAK-875 (fasiglifam). AM-8182 is a full agonist, while AM-6331 and TAK-875 (fasiglifam) are partial agonists that potentiate the activity of the endogenous ligands, such as alpha-linolenic acid and gamma-linolenic acid. Its function is as follows. G-protein coupled receptor for medium and long chain saturated and unsaturated fatty acids that plays an important role in glucose homeostasis. Fatty acid binding increases glucose-stimulated insulin secretion, and may also enhance the secretion of glucagon-like peptide 1 (GLP-1). May also play a role in bone homeostasis; receptor signaling activates pathways that inhibit osteoclast differentiation. Ligand binding leads to a conformation change that triggers signaling via G-proteins that activate phospholipase C, leading to an increase of the intracellular calcium concentration. Seems to act through a G(q) and G(i)-mediated pathway. Mediates the anti-inflammatory effects of omega-3 polyunsaturated fatty acids (PUFAs) via inhibition of NLRP3 inflammasome activation. This is Free fatty acid receptor 1 (Ffar1) from Mus musculus (Mouse).